Consider the following 331-residue polypeptide: Ribose operon repressor (331 aa).

Residues 1-56 (MTTIRDVAKHAKVSVATVSRVLNKKGYVSKEAEEAVLQAIKELNYQPSSVARSLYH) form the HTH lacI-type domain. The segment at residues 4–23 (IRDVAKHAKVSVATVSRVLN) is a DNA-binding region (H-T-H motif).

Transcriptional repressor for the ribose rbsDACBK operon. The sequence is that of Ribose operon repressor (rbsR) from Halalkalibacterium halodurans (strain ATCC BAA-125 / DSM 18197 / FERM 7344 / JCM 9153 / C-125) (Bacillus halodurans).